Reading from the N-terminus, the 193-residue chain is Interleukin-18 (193 aa).

Residues 1–36 (MAAEPVEDNCINFVAMKFIDNTLYFIAEDDENLESD) constitute a propeptide that is removed on maturation.

This sequence belongs to the IL-1 family. In terms of assembly, forms a ternary complex with ligand-binding receptor subunit IL18R1 and signaling receptor subunit IL18RAP at the plasma membrane. Mature IL18 first binds to IL18R1 forming a low affinity binary complex, which then interacts with IL18RAP to form a high affinity ternary complex that signals inside the cell. Interacts with cargo receptor TMED10; the interaction mediates the translocation from the cytoplasm into the ERGIC (endoplasmic reticulum-Golgi intermediate compartment) and thereby secretion. In terms of processing, the pro-IL-18 precursor is processed by CASP1, CASP4 or CASP5 to yield its mature, active form. The pro-IL-18 precursor features autoinhibitory interactions between the propeptide and the post-cleavage-site region, preventing recognition by the IL18R1 receptor. Processing by CASP1, CASP4 or CASP5 induces conformational changes to generate critical receptor-binding sites. The mature form is then secreted and released in the extracellular milieu by passing through the gasdermin-D (GSDMD) pore. In contrast, cleavage by CASP3 inactivates IL18. Expressed in ovarian carcinoma but undetectable in normal ovarian epithelial cells. Resistant to proteolytic activation by caspase-1 and -4.

It is found in the cytoplasm. The protein localises to the cytosol. The protein resides in the secreted. Pro-inflammatory cytokine primarily involved in epithelial barrier repair, polarized T-helper 1 (Th1) cell and natural killer (NK) cell immune responses. Upon binding to IL18R1 and IL18RAP, forms a signaling ternary complex which activates NF-kappa-B, triggering synthesis of inflammatory mediators. Synergizes with IL12/interleukin-12 to induce IFNG synthesis from T-helper 1 (Th1) cells and natural killer (NK) cells. Involved in transduction of inflammation downstream of pyroptosis: its mature form is specifically released in the extracellular milieu by passing through the gasdermin-D (GSDMD) pore. This is Interleukin-18 from Homo sapiens (Human).